The chain runs to 191 residues: Probable DNA-directed RNA polymerase subunit delta (191 aa).

The HTH HARE-type domain maps to 14–83 (LSMIEVARAI…GENKWGLRSW (70 aa)). Acidic residues-rich tracts occupy residues 117 to 136 (GDEDAIDYNDDDPEDEDFTE) and 142 to 191 (EYDE…EEEV). The interval 117–191 (GDEDAIDYND…DEEEEEEEEV (75 aa)) is disordered.

This sequence belongs to the RpoE family. In terms of assembly, RNAP is composed of a core of 2 alpha, a beta and a beta' subunits. The core is associated with a delta subunit and one of several sigma factors.

Functionally, participates in both the initiation and recycling phases of transcription. In the presence of the delta subunit, RNAP displays an increased specificity of transcription, a decreased affinity for nucleic acids, and an increased efficiency of RNA synthesis because of enhanced recycling. The polypeptide is Probable DNA-directed RNA polymerase subunit delta (Streptococcus agalactiae serotype Ia (strain ATCC 27591 / A909 / CDC SS700)).